The primary structure comprises 487 residues: Serralysin (487 aa).

Residues 1-16 constitute a propeptide that is removed on maturation; sequence MQSTKKAIEITESNFA. Zn(2+) is bound at residue H192. E193 is an active-site residue. Zn(2+)-binding residues include H196, H202, and Y232. Ca(2+)-binding residues include R269, G271, T273, D301, G303, G304, D306, T343, E345, G350, G352, D354, N359, A361, N363, G367, G368, A369, D372, G376, G377, G378, G379, D381, G385, G386, A387, G388, D390, D399, D406, and D416. Hemolysin-type calcium-binding repeat units lie at residues 348–365 and 366–383; these read IGGS…NNVL and KGGA…ADEL.

The protein belongs to the peptidase M10B family. It depends on Ca(2+) as a cofactor. Zn(2+) serves as cofactor.

It is found in the secreted. It carries out the reaction Preferential cleavage of bonds with hydrophobic residues in P1'.. Functionally, naturally present in the silkworm intestine and allows the emerging moth to dissolve its cocoon. The chain is Serralysin from Serratia marcescens (strain ATCC 21074 / E-15).